Consider the following 224-residue polypeptide: Heme response regulator HssR (224 aa).

One can recognise a Response regulatory domain in the interval 3-116 (TCLIVDDDPK…ELMFRIKAVL (114 aa)). Residue Asp52 is modified to 4-aspartylphosphate. Positions 124–222 (NNEVSIGNLT…VRGLGYKVDD (99 aa)) form a DNA-binding region, ompR/PhoB-type.

Post-translationally, phosphorylated by HssS.

The protein localises to the cytoplasm. Member of the two-component regulatory system HssS/HssR involved in intracellular heme homeostasis and tempering of staphylococcal virulence. Phosphorylated HssR binds to a direct repeat sequence within hrtAB promoter and activates the expression of hrtAB, an efflux pump, in response to extracellular heme, hemin, hemoglobin or blood. This Staphylococcus saprophyticus subsp. saprophyticus (strain ATCC 15305 / DSM 20229 / NCIMB 8711 / NCTC 7292 / S-41) protein is Heme response regulator HssR (hssR).